A 183-amino-acid chain; its full sequence is Threonylcarbamoyl-AMP synthase (183 aa).

In terms of domain architecture, YrdC-like spans 1–183 (MNITQIIEKL…LFTNQLVRQG (183 aa)).

This sequence belongs to the SUA5 family. TsaC subfamily.

Its subcellular location is the cytoplasm. The catalysed reaction is L-threonine + hydrogencarbonate + ATP = L-threonylcarbamoyladenylate + diphosphate + H2O. Required for the formation of a threonylcarbamoyl group on adenosine at position 37 (t(6)A37) in tRNAs that read codons beginning with adenine. Catalyzes the conversion of L-threonine, HCO(3)(-)/CO(2) and ATP to give threonylcarbamoyl-AMP (TC-AMP) as the acyladenylate intermediate, with the release of diphosphate. The polypeptide is Threonylcarbamoyl-AMP synthase (Histophilus somni (strain 129Pt) (Haemophilus somnus)).